We begin with the raw amino-acid sequence, 250 residues long: Small ribosomal subunit protein uS2 (250 aa).

It belongs to the universal ribosomal protein uS2 family.

The polypeptide is Small ribosomal subunit protein uS2 (Paraburkholderia xenovorans (strain LB400)).